The chain runs to 213 residues: Orotate phosphoribosyltransferase (213 aa).

5-phospho-alpha-D-ribose 1-diphosphate is bound at residue K26. 34-35 (FF) contacts orotate. 5-phospho-alpha-D-ribose 1-diphosphate is bound by residues 72-73 (YK), R99, K100, K103, H105, and 124-132 (DDVITAGTA). T128 and R156 together coordinate orotate.

It belongs to the purine/pyrimidine phosphoribosyltransferase family. PyrE subfamily. As to quaternary structure, homodimer. Requires Mg(2+) as cofactor.

The enzyme catalyses orotidine 5'-phosphate + diphosphate = orotate + 5-phospho-alpha-D-ribose 1-diphosphate. It functions in the pathway pyrimidine metabolism; UMP biosynthesis via de novo pathway; UMP from orotate: step 1/2. Catalyzes the transfer of a ribosyl phosphate group from 5-phosphoribose 1-diphosphate to orotate, leading to the formation of orotidine monophosphate (OMP). This chain is Orotate phosphoribosyltransferase, found in Vibrio parahaemolyticus serotype O3:K6 (strain RIMD 2210633).